We begin with the raw amino-acid sequence, 930 residues long: Zn(2)-C6 fungal-type transcription factor FTF1c (930 aa).

A DNA-binding region (zn(2)-C6 fungal-type) is located at residues 137 to 164; the sequence is CIACRRKKIRCSGEKPACEHCLCSYIPC.

It localises to the nucleus. Functionally, zn(2)-C6 fungal-type transcription factor that has a role in the establishment of the fungus within the plant and/or the progress of the disease. Regulates the expression of virulence factors such as SIX1 and SIX6. The protein is Zn(2)-C6 fungal-type transcription factor FTF1c of Fusarium oxysporum f. sp. lycopersici (strain 4287 / CBS 123668 / FGSC 9935 / NRRL 34936) (Fusarium vascular wilt of tomato).